A 25-amino-acid chain; its full sequence is Inorganic pyrophosphatase (25 aa).

As to quaternary structure, monomer. The cofactor is Mg(2+).

The catalysed reaction is diphosphate + H2O = 2 phosphate + H(+). In Cyanophora paradoxa, this protein is Inorganic pyrophosphatase.